Reading from the N-terminus, the 111-residue chain is Large ribosomal subunit protein uL24 (111 aa).

Belongs to the universal ribosomal protein uL24 family. As to quaternary structure, part of the 50S ribosomal subunit.

In terms of biological role, one of two assembly initiator proteins, it binds directly to the 5'-end of the 23S rRNA, where it nucleates assembly of the 50S subunit. Functionally, one of the proteins that surrounds the polypeptide exit tunnel on the outside of the subunit. This is Large ribosomal subunit protein uL24 from Bifidobacterium longum (strain DJO10A).